The following is a 436-amino-acid chain: 3-hydroxy-3-methylglutaryl-coenzyme A reductase (436 aa).

Residues Glu-99, Lys-277, and Asp-293 each act as charge relay system in the active site. The Proton donor role is filled by His-390.

The protein belongs to the HMG-CoA reductase family.

It catalyses the reaction (R)-mevalonate + 2 NADP(+) + CoA = (3S)-3-hydroxy-3-methylglutaryl-CoA + 2 NADPH + 2 H(+). Its pathway is metabolic intermediate biosynthesis; (R)-mevalonate biosynthesis; (R)-mevalonate from acetyl-CoA: step 3/3. Converts HMG-CoA to mevalonate. In Archaeoglobus fulgidus (strain ATCC 49558 / DSM 4304 / JCM 9628 / NBRC 100126 / VC-16), this protein is 3-hydroxy-3-methylglutaryl-coenzyme A reductase (hmgA).